The primary structure comprises 436 residues: Serine carboxypeptidase-like 15 (436 aa).

A signal peptide spans Met1–Ser24. Intrachain disulfides connect Cys83–Cys326, Cys247–Cys261, and Cys285–Cys292. N-linked (GlcNAc...) asparagine glycosylation occurs at Asn104. Ser179 is an active-site residue. 2 N-linked (GlcNAc...) asparagine glycosylation sites follow: Asn306 and Asn345. Asp361 is a catalytic residue. N-linked (GlcNAc...) asparagine glycosylation occurs at Asn377. His414 is a catalytic residue.

It belongs to the peptidase S10 family. Expressed in seedlings and roots.

It localises to the secreted. Functionally, probable carboxypeptidase. The sequence is that of Serine carboxypeptidase-like 15 (SCPL15) from Arabidopsis thaliana (Mouse-ear cress).